A 1120-amino-acid polypeptide reads, in one-letter code: Cluster 41 polyketide synthase (1120 aa).

Residues 7-430 form the Ketosynthase family 3 (KS3) domain; the sequence is PHDVAVVGMG…GTVSHAIIEK (424 aa). Active-site for beta-ketoacyl synthase activity residues include Cys178, His313, and His353. The tract at residues 539-796 is malonyl-CoA:ACP transacylase (MAT) domain; that stretch reads VWVFSGHGAQ…TSAISAAAED (258 aa). The For acyl/malonyl transferase activity role is filled by Ser625. The segment at 804–943 is ketoreductase (KR) domain; sequence IKKILSMESR…IAMQWTSWRE (140 aa). Residues 1042-1116 enclose the Carrier domain; sequence DSLSRQVREC…HIVKWLMEKT (75 aa). Ser1076 is subject to O-(pantetheine 4'-phosphoryl)serine.

In terms of biological role, polyketide synthase; part of the gene cluster 41 that mediates the biosynthesis of an extracellular and diffusible metabolite that is able to stimulate colony sclerotial production. This is Cluster 41 polyketide synthase from Aspergillus flavus (strain ATCC 200026 / FGSC A1120 / IAM 13836 / NRRL 3357 / JCM 12722 / SRRC 167).